Consider the following 190-residue polypeptide: RNA-binding protein OPG065 (190 aa).

Positions 5–70 (YIDERSDAEI…DIPPRWFMTT (66 aa)) constitute a Z-binding domain. The 68-residue stretch at 117–184 (NPVTIINEYC…AKLAVDKLLG (68 aa)) folds into the DRBM domain.

This sequence belongs to the orthopoxvirus OPG065 family. Interacts with host G1P2/ISG15. Interacts with host EIF2AK2/PKR. Interacts with host ZBP1.

RNA-binding protein that plays a role in the inhibition of multiple cellular antiviral responses activated by double-stranded RNA (dsRNA), such as inhibition of PKR activation, necroptosis, and IFN-mediated antiviral activities. Recognizes and binds Z-RNA structures via its Z-binding domain and dsRNA via its DRBM domain: RNA-binding activity is required to escape host ZBP1-dependent necroptosis. Mechanistically, the Z-binding domain binds Z-RNAs that are produced during vaccinia virus infection, thereby competing with Z-RNA detection by host ZBP1, suppressing ZBP1-dependent necroptosis. Acts as a key inhibitor of the interferon response by blocking the phosphorylation and subsequent activation of IRF3 and IRF7 kinases that are required for interferon-alpha gene expression. Inhibits NF-kappa-B activation and the ubiquitin-like protein ISG15, which is an early antiviral protein. The binding with host ISG15 subsequently blocks host ISGylation. The polypeptide is RNA-binding protein OPG065 (OPG065) (Homo sapiens (Human)).